Reading from the N-terminus, the 205-residue chain is Proteasome subunit beta type-3 (205 aa).

Ser2 bears the N-acetylserine mark. Lys77 carries the post-translational modification N6-acetyllysine.

The protein belongs to the peptidase T1B family. As to quaternary structure, the 26S proteasome consists of a 20S proteasome core and two 19S regulatory subunits. The 20S proteasome core is a barrel-shaped complex made of 28 subunits that are arranged in four stacked rings. The two outer rings are each formed by seven alpha subunits, and the two inner rings are formed by seven beta subunits. The proteolytic activity is exerted by three beta-subunits PSMB5, PSMB6 and PSMB7.

The protein resides in the cytoplasm. It is found in the nucleus. Its function is as follows. Non-catalytic component of the 20S core proteasome complex involved in the proteolytic degradation of most intracellular proteins. This complex plays numerous essential roles within the cell by associating with different regulatory particles. Associated with two 19S regulatory particles, forms the 26S proteasome and thus participates in the ATP-dependent degradation of ubiquitinated proteins. The 26S proteasome plays a key role in the maintenance of protein homeostasis by removing misfolded or damaged proteins that could impair cellular functions, and by removing proteins whose functions are no longer required. Associated with the PA200 or PA28, the 20S proteasome mediates ubiquitin-independent protein degradation. This type of proteolysis is required in several pathways including spermatogenesis (20S-PA200 complex) or generation of a subset of MHC class I-presented antigenic peptides (20S-PA28 complex). This Rattus norvegicus (Rat) protein is Proteasome subunit beta type-3 (Psmb3).